A 220-amino-acid polypeptide reads, in one-letter code: MKEYDYLFKIIVIGDSGTGKSSLLLRFADNTYSESYMSTIGVDFKIKTVKIDNTTIKLQIWDTAGQERFRTITSTYYRGAHGIICVYDVTNKLSFDHITETWLQDIDKYATSNVCKLLIGNKIDLVDSRVVLADEAKHVAEQNNMNYIEASAKTDSNVEKAFTTIAKALKDKVTQYPSNAPTSTVNLSNASKVTTNRGISDSCQESSVFKKMNFSSGKCT.

A GTP-binding site is contributed by 14–21 (GDSGTGKS). The Effector region signature appears at 36–44 (YMSTIGVDF). GTP is bound by residues 62–66 (DTAGQ) and 121–124 (NKID). C219 carries the S-geranylgeranyl cysteine lipid modification.

This sequence belongs to the small GTPase superfamily. Rab family.

It localises to the cell membrane. Functionally, protein transport. Probably involved in vesicular traffic from ER to Golgi. The chain is Ras-related protein Rab-1 (rab1) from Theileria annulata.